The sequence spans 422 residues: Proline--tRNA ligase (422 aa).

The protein belongs to the class-II aminoacyl-tRNA synthetase family. ProS type 2 subfamily. As to quaternary structure, homodimer.

Its subcellular location is the cytoplasm. The catalysed reaction is tRNA(Pro) + L-proline + ATP = L-prolyl-tRNA(Pro) + AMP + diphosphate. Its function is as follows. Catalyzes the attachment of proline to tRNA(Pro) in a two-step reaction: proline is first activated by ATP to form Pro-AMP and then transferred to the acceptor end of tRNA(Pro). The sequence is that of Proline--tRNA ligase from Wolbachia pipientis wMel.